The chain runs to 567 residues: MTLNGWIQILVFCGIIGLLTKPLGFYMHRVFNGDRTPLSPIFGPLERGLYRICGTSEREEQHWTAYAVALLLFNLAGFLVLYALQRLQGSLPYNPAGMGAVDPALAFNTAASFVTNTNWQNYGGESTMSYLLQMAGLTVQNFVSAATGIAIAIALIRGFARASGKSIGNFWVDMTRCTLYVLLPLCIVLTLVYVWLGIPQTLGPYVDATTLEGAKQTIALGPVASQVAIKMLGTNGGGFFNANAAHPFENPDAISNLIQMVTIFALGAALTNVFGRMVGNQRQGWAILASMGALFIAGVAVCYWAEAAGNPLVHALGLDGGNMEGKETRFGIALSALFAVITTAASCGAVNAMHDSFTALGGMIPLINMQLGEVIVGGVGAGFYGILMFIVVAVFVAGLMVGRTPEYLGKKIEAKEVKMAMLAILCLPLAMLIFTAIAVVLPSAVASIANGGPHGFSEVLYAYTSAAANNGSAFGGLSGNTPWYNITIGIGMLMGRFLVIIPALAIAGSLAAKKTVPASAGTFPTDGPLFVGLLIGVIVIVGGLTFFPALAVGPIIEHLAMIHGQTF.

11 helical membrane passes run 5-25 (GWIQILVFCGIIGLLTKPLGF), 64-84 (TAYAVALLLFNLAGFLVLYAL), 136-156 (GLTVQNFVSAATGIAIAIALI), 179-199 (LYVLLPLCIVLTLVYVWLGIP), 254-274 (ISNLIQMVTIFALGAALTNVF), 285-305 (WAILASMGALFIAGVAVCYWA), 330-350 (FGIALSALFAVITTAASCGAV), 357-376 (FTALGGMIPLINMQLGEVIV), 421-441 (MLAILCLPLAMLIFTAIAVVL), 486-506 (ITIGIGMLMGRFLVIIPALAI), and 529-549 (LFVGLLIGVIVIVGGLTFFPA).

The protein belongs to the KdpA family. The system is composed of three essential subunits: KdpA, KdpB and KdpC.

It localises to the cell inner membrane. Its function is as follows. Part of the high-affinity ATP-driven potassium transport (or Kdp) system, which catalyzes the hydrolysis of ATP coupled with the electrogenic transport of potassium into the cytoplasm. This subunit binds the periplasmic potassium ions and delivers the ions to the membrane domain of KdpB through an intramembrane tunnel. This chain is Potassium-transporting ATPase potassium-binding subunit, found in Mesorhizobium japonicum (strain LMG 29417 / CECT 9101 / MAFF 303099) (Mesorhizobium loti (strain MAFF 303099)).